Consider the following 513-residue polypeptide: MINLKIGQKLQLEIERMGINGEGIGVISGRLVFIPYALPGEEVLVEITENARNFSRAKLVKIIEKSPNRVKPQDRAYHEMSQSHIMHLSYPMQLEFKRDVMRQALEKYKPAGWRNYELRATLGMENTLGYRNKLQFQVRRLNDGTVIAGLYQEGTHHLVNLDNCLVQDPKTQEIINHICRLIEKFDLPVYDERKIGGIRTVMVRRSQKTGEVQIIFVTSTPIILDGQVWPELREEPSKRQKNSFVKFDKMLSALTEEFEEIVTVAVNFHPRKTSEIYGERTQILFNEKETITEGVLDYEFELSPRAFYQLNSEQANVLYGEAVKALNPKKDDRVIDAYCGVGTIGFAVAKKVKSVHGMDITPESIFDARENAKRLGLKNCHYEIGKAERIIPNWNKSGHRATAMIVDPPRTGLDDALLETITKFPPEKMVYVSCNVSTLAKDLVVLANFYKVEYIQSVDMFPHTARTEAVVKLTKRDEPLKIVKFEHLEEERKAEAFAKGKKRGRRPQKYGKY.

Positions 3–61 (NLKIGQKLQLEIERMGINGEGIGVISGRLVFIPYALPGEEVLVEITENARNFSRAKLVK) constitute a TRAM domain. Residues Gln-309, Tyr-338, Asp-359, and Asp-407 each contribute to the S-adenosyl-L-methionine site. Cys-434 functions as the Nucleophile in the catalytic mechanism.

This sequence belongs to the class I-like SAM-binding methyltransferase superfamily. RNA M5U methyltransferase family.

This is an uncharacterized protein from Lactococcus lactis subsp. lactis (strain IL1403) (Streptococcus lactis).